Consider the following 502-residue polypeptide: UPF0371 protein CLD_0424 (502 aa).

This sequence belongs to the UPF0371 family.

This Clostridium botulinum (strain Okra / Type B1) protein is UPF0371 protein CLD_0424.